Here is a 175-residue protein sequence, read N- to C-terminus: Large ribosomal subunit protein uL10 (175 aa).

It belongs to the universal ribosomal protein uL10 family. Part of the ribosomal stalk of the 50S ribosomal subunit. The N-terminus interacts with L11 and the large rRNA to form the base of the stalk. The C-terminus forms an elongated spine to which L12 dimers bind in a sequential fashion forming a multimeric L10(L12)X complex.

Its function is as follows. Forms part of the ribosomal stalk, playing a central role in the interaction of the ribosome with GTP-bound translation factors. The polypeptide is Large ribosomal subunit protein uL10 (Mycobacterium sp. (strain KMS)).